The primary structure comprises 369 residues: Anhydro-N-acetylmuramic acid kinase (369 aa).

Position 11-18 (11-18 (GTSMDAVD)) interacts with ATP.

Belongs to the anhydro-N-acetylmuramic acid kinase family.

It carries out the reaction 1,6-anhydro-N-acetyl-beta-muramate + ATP + H2O = N-acetyl-D-muramate 6-phosphate + ADP + H(+). It functions in the pathway amino-sugar metabolism; 1,6-anhydro-N-acetylmuramate degradation. It participates in cell wall biogenesis; peptidoglycan recycling. In terms of biological role, catalyzes the specific phosphorylation of 1,6-anhydro-N-acetylmuramic acid (anhMurNAc) with the simultaneous cleavage of the 1,6-anhydro ring, generating MurNAc-6-P. Is required for the utilization of anhMurNAc either imported from the medium or derived from its own cell wall murein, and thus plays a role in cell wall recycling. This chain is Anhydro-N-acetylmuramic acid kinase, found in Idiomarina loihiensis (strain ATCC BAA-735 / DSM 15497 / L2-TR).